The chain runs to 411 residues: Adenylosuccinate synthetase (411 aa).

GTP-binding positions include 11–17 (GDEGKGK) and 39–41 (GHT). The active-site Proton acceptor is the D12. Positions 12 and 39 each coordinate Mg(2+). IMP-binding positions include 12-15 (DEGK), 37-40 (NAGH), T121, R135, Q215, T230, and R294. H40 acts as the Proton donor in catalysis. 290–296 (TTTKRPR) is a substrate binding site. Residues R296, 322–324 (KLD), and 400–402 (STS) each bind GTP.

It belongs to the adenylosuccinate synthetase family. As to quaternary structure, homodimer. It depends on Mg(2+) as a cofactor.

Its subcellular location is the cytoplasm. It catalyses the reaction IMP + L-aspartate + GTP = N(6)-(1,2-dicarboxyethyl)-AMP + GDP + phosphate + 2 H(+). The protein operates within purine metabolism; AMP biosynthesis via de novo pathway; AMP from IMP: step 1/2. Plays an important role in the de novo pathway of purine nucleotide biosynthesis. Catalyzes the first committed step in the biosynthesis of AMP from IMP. The sequence is that of Adenylosuccinate synthetase from Helicobacter pylori (strain HPAG1).